The following is a 330-amino-acid chain: 2-keto-3-deoxygluconate permease (330 aa).

10 consecutive transmembrane segments (helical) span residues 10-30 (VPGG…TFAP), 42-62 (ALIT…GATI), 77-97 (LLLG…QFIP), 100-120 (GIQS…VMNE), 140-160 (GAFA…TFGV), 163-183 (LAAF…LGCI), 200-220 (PAII…GMLI), 224-244 (LLGI…LFLL), 254-274 (VAGV…YALA), and 289-309 (AIIA…TVWV).

The protein belongs to the KdgT transporter family.

The protein localises to the cell membrane. The enzyme catalyses 2-dehydro-3-deoxy-D-gluconate(in) + H(+)(in) = 2-dehydro-3-deoxy-D-gluconate(out) + H(+)(out). Functionally, catalyzes the proton-dependent uptake of 2-keto-3-deoxygluconate (KDG) into the cell. This Bacillus subtilis (strain 168) protein is 2-keto-3-deoxygluconate permease.